A 546-amino-acid polypeptide reads, in one-letter code: Chaperonin GroEL (546 aa).

ATP contacts are provided by residues 30–33 (TLGP), Lys-51, 87–91 (DGTTT), Gly-415, 479–481 (NAA), and Asp-495. A disordered region spans residues 526-546 (KEEKPDLSGAGAGMGGMGGMM). Gly residues predominate over residues 535–546 (AGAGMGGMGGMM).

The protein belongs to the chaperonin (HSP60) family. Forms a cylinder of 14 subunits composed of two heptameric rings stacked back-to-back. Interacts with the co-chaperonin GroES.

The protein resides in the cytoplasm. The enzyme catalyses ATP + H2O + a folded polypeptide = ADP + phosphate + an unfolded polypeptide.. Together with its co-chaperonin GroES, plays an essential role in assisting protein folding. The GroEL-GroES system forms a nano-cage that allows encapsulation of the non-native substrate proteins and provides a physical environment optimized to promote and accelerate protein folding. The polypeptide is Chaperonin GroEL (Wigglesworthia glossinidia brevipalpis).